A 596-amino-acid chain; its full sequence is Protein kinase C iota type (596 aa).

Residues 1-12 show a composition bias toward polar residues; sequence MPTQRDSSTMSH. Residues 1-23 are disordered; the sequence is MPTQRDSSTMSHTVAGGGSGDHS. An N-acetylproline modification is found at P2. The segment at 2-28 is required for interaction with RAB2; that stretch reads PTQRDSSTMSHTVAGGGSGDHSHQVRV. The regulatory domain stretch occupies residues 2 to 253; the sequence is PTQRDSSTMS…KASSSLGLQD (252 aa). Position 3 is a phosphothreonine (T3). A phosphoserine mark is found at S7 and S8. Position 9 is a phosphothreonine (T9). In terms of domain architecture, PB1 spans 25 to 108; sequence QVRVKAYYRG…SELLIHVFPC (84 aa). Residues 72-91 form an interaction with PARD6A region; sequence DEEGDPCTVSSQLELEEAFR. The Pseudosubstrate motif lies at 125 to 134; sequence YRRGARRWRK. The segment at 140-190 adopts a Phorbol-ester/DAG-type zinc-finger fold; that stretch reads GHTFQAKRFNRRAHCAICTDRIWGLGRQGYKCINCKLLVHKKCHKLVTIEC. The segment at 221–246 is disordered; the sequence is PSSHESLDQVGEEKEAMNTRESGKAS. The segment covering 225–243 has biased composition (basic and acidic residues); the sequence is ESLDQVGEEKEAMNTRESG. The region spanning 254 to 522 is the Protein kinase domain; the sequence is FDLLRVIGRG…FADIQGHPFF (269 aa). 260-268 is a binding site for ATP; sequence IGRGSYAKV. 2 positions are modified to phosphotyrosine; by SRC: Y265 and Y280. An ATP-binding site is contributed by K283. At Y334 the chain carries Phosphotyrosine; by SRC. The active-site Proton acceptor is D378. T412 carries the phosphothreonine; by PDPK1 modification. An AGC-kinase C-terminal domain is found at 523–594; that stretch reads RNVDWDMMEQ…INPLLMSAEE (72 aa). A Phosphothreonine modification is found at T564.

The protein belongs to the protein kinase superfamily. AGC Ser/Thr protein kinase family. PKC subfamily. Forms a complex with SQSTM1 and MP2K5. Interacts directly with SQSTM1. Interacts with IKBKB. Interacts with PARD6A, PARD6B and PARD6G. Part of a quaternary complex containing aPKC, PARD3, a PARD6 protein (PARD6A, PARD6B or PARD6G) and a GTPase protein (CDC42 or RAC1). Part of a complex with LLGL1 and PARD6B. Interacts with ADAP1/CENTA1. Interaction with SMG1, through the ZN-finger domain, activates the kinase activity. Interacts with CDK7. Forms a complex with RAB2A and GAPDH involved in recruitment onto the membrane of vesicular tubular clusters (VTCs). Interacts with ECT2 ('Thr-359' phosphorylated form). Interacts with VAMP2. Interacts with WDFY2 (via WD repeats 1-3). Post-translationally, phosphorylation at Thr-412 in the activation loop is not mandatory for activation. Upon neuronal growth factor (NGF) stimulation, phosphorylated by SRC at Tyr-265, Tyr-280 and Tyr-334. Phosphorylation at Tyr-265 facilitates binding to KPNB1/importin-beta regulating entry of PRKCI into the nucleus. Phosphorylation on Tyr-334 is important for NF-kappa-B stimulation. Phosphorylated at Thr-564 during the initial phase of long term potentiation.

It is found in the cytoplasm. The protein resides in the membrane. The protein localises to the endosome. Its subcellular location is the nucleus. It catalyses the reaction L-seryl-[protein] + ATP = O-phospho-L-seryl-[protein] + ADP + H(+). The enzyme catalyses L-threonyl-[protein] + ATP = O-phospho-L-threonyl-[protein] + ADP + H(+). Atypical PKCs (PRKCI and PRKCZ) exhibit an elevated basal enzymatic activity (that may be due to the interaction with SMG1 or SQSTM1) and are not regulated by diacylglycerol, phosphatidylserine, phorbol esters or calcium ions. Two specific sites, Thr-412 (activation loop of the kinase domain) and Thr-564 (turn motif), need to be phosphorylated for its full activation. Might also be a target for novel lipid activators that are elevated during nutrient-stimulated insulin secretion. Its function is as follows. Calcium- and diacylglycerol-independent serine/ threonine-protein kinase that plays a general protective role against apoptotic stimuli, is involved in NF-kappa-B activation, cell survival, differentiation and polarity, and contributes to the regulation of microtubule dynamics in the early secretory pathway. Is necessary for BCR-ABL oncogene-mediated resistance to apoptotic drug in leukemia cells, protecting leukemia cells against drug-induced apoptosis. In cultured neurons, prevents amyloid beta protein-induced apoptosis by interrupting cell death process at a very early step. In glioblastoma cells, may function downstream of phosphatidylinositol 3-kinase (PI(3)K) and PDPK1 in the promotion of cell survival by phosphorylating and inhibiting the pro-apoptotic factor BAD. Can form a protein complex in non-small cell lung cancer (NSCLC) cells with PARD6A and ECT2 and regulate ECT2 oncogenic activity by phosphorylation, which in turn promotes transformed growth and invasion. In response to nerve growth factor (NGF), acts downstream of SRC to phosphorylate and activate IRAK1, allowing the subsequent activation of NF-kappa-B and neuronal cell survival. Functions in the organization of the apical domain in epithelial cells by phosphorylating EZR. This step is crucial for activation and normal distribution of EZR at the early stages of intestinal epithelial cell differentiation. Forms a protein complex with LLGL1 and PARD6B independently of PARD3 to regulate epithelial cell polarity. Plays a role in microtubule dynamics in the early secretory pathway through interaction with RAB2A and GAPDH and recruitment to vesicular tubular clusters (VTCs). In human coronary artery endothelial cells (HCAEC), is activated by saturated fatty acids and mediates lipid-induced apoptosis. Involved in early synaptic long term potentiation phase in CA1 hippocampal cells and short term memory formation. The sequence is that of Protein kinase C iota type (PRKCI) from Pongo abelii (Sumatran orangutan).